Reading from the N-terminus, the 335-residue chain is S-adenosylmethionine:tRNA ribosyltransferase-isomerase (335 aa).

It belongs to the QueA family. As to quaternary structure, monomer.

It is found in the cytoplasm. It carries out the reaction 7-aminomethyl-7-carbaguanosine(34) in tRNA + S-adenosyl-L-methionine = epoxyqueuosine(34) in tRNA + adenine + L-methionine + 2 H(+). The protein operates within tRNA modification; tRNA-queuosine biosynthesis. In terms of biological role, transfers and isomerizes the ribose moiety from AdoMet to the 7-aminomethyl group of 7-deazaguanine (preQ1-tRNA) to give epoxyqueuosine (oQ-tRNA). This is S-adenosylmethionine:tRNA ribosyltransferase-isomerase from Thermosipho africanus (strain TCF52B).